Consider the following 56-residue polypeptide: Calsequestrin-1 (56 aa).

The residue at position 9 (Tyr-9) is a Phosphotyrosine. At Ser-47 the chain carries Phosphoserine.

It belongs to the calsequestrin family. As to quaternary structure, monomer; increases in response to a depletion of intracellular calcium. Homodimer. Homotetramer and homopolymer. Can form linear homooligomers. Ca(2+) ions promote oligomerization. Interacts (via C-terminal end and preferentially with the monomeric form) with STIM1; this interaction increases in response to a depletion of intracellular calcium, decreases both STIM1 aggregation and clustering, interaction of STIM1 with ORAI1 and store-operated Ca(2+) entry (SOCE) activity. Interacts with ASPH and TRDN. N-glycosylated.

The protein localises to the endoplasmic reticulum. The protein resides in the sarcoplasmic reticulum. Its subcellular location is the sarcoplasmic reticulum lumen. It localises to the sarcoplasmic reticulum membrane. It is found in the mitochondrion matrix. Calsequestrin is a high-capacity, moderate affinity, calcium-binding protein and thus acts as an internal calcium store in muscle. Calcium ions are bound by clusters of acidic residues at the protein surface, often at the interface between subunits. Can bind around 80 Ca(2+) ions. Regulates the release of lumenal Ca(2+) via the calcium release channel RYR1; this plays an important role in triggering muscle contraction. Negatively regulates store-operated Ca(2+) entry (SOCE) activity. This chain is Calsequestrin-1 (CASQ1), found in Canis lupus familiaris (Dog).